A 135-amino-acid polypeptide reads, in one-letter code: ATP synthase epsilon chain (135 aa).

Residues 89 to 100 (SGKAEAELEKAK) show a composition bias toward basic and acidic residues. The tract at residues 89-114 (SGKAEAELEKAKNQLSQNKDQGNSPE) is disordered. Polar residues predominate over residues 101-112 (NQLSQNKDQGNS).

The protein belongs to the ATPase epsilon chain family. As to quaternary structure, F-type ATPases have 2 components, CF(1) - the catalytic core - and CF(0) - the membrane proton channel. CF(1) has five subunits: alpha(3), beta(3), gamma(1), delta(1), epsilon(1). CF(0) has three main subunits: a, b and c.

The protein localises to the cellular thylakoid membrane. In terms of biological role, produces ATP from ADP in the presence of a proton gradient across the membrane. This is ATP synthase epsilon chain from Prochlorococcus marinus (strain NATL2A).